Consider the following 140-residue polypeptide: ATP synthase epsilon chain (140 aa).

It belongs to the ATPase epsilon chain family. As to quaternary structure, F-type ATPases have 2 components, CF(1) - the catalytic core - and CF(0) - the membrane proton channel. CF(1) has five subunits: alpha(3), beta(3), gamma(1), delta(1), epsilon(1). CF(0) has three main subunits: a, b and c.

It localises to the cell inner membrane. Functionally, produces ATP from ADP in the presence of a proton gradient across the membrane. The chain is ATP synthase epsilon chain from Nitrosococcus oceani (strain ATCC 19707 / BCRC 17464 / JCM 30415 / NCIMB 11848 / C-107).